Here is a 558-residue protein sequence, read N- to C-terminus: Formate--tetrahydrofolate ligase (558 aa).

Thr-66–Thr-73 lines the ATP pocket.

This sequence belongs to the formate--tetrahydrofolate ligase family.

It catalyses the reaction (6S)-5,6,7,8-tetrahydrofolate + formate + ATP = (6R)-10-formyltetrahydrofolate + ADP + phosphate. It functions in the pathway one-carbon metabolism; tetrahydrofolate interconversion. This Neisseria gonorrhoeae (strain ATCC 700825 / FA 1090) protein is Formate--tetrahydrofolate ligase.